Reading from the N-terminus, the 319-residue chain is Telomere-binding protein cav (319 aa).

Residues 107-312 (RRKMVQPYPE…SISFQNSGSE (206 aa)) form a required for binding to Su(var)205 region. Disordered regions lie at residues 141-163 (WQKQ…DNEV) and 186-248 (PSDL…PDYY). Short sequence motifs (su(var)205-binding Pro-containing repeat) lie at residues 220-224 (PETQM) and 273-279 (PETEMNE). Residues 291–311 (SMSIGPSINSDGSISFQNSGS) are compositionally biased toward polar residues. Residues 291 to 319 (SMSIGPSINSDGSISFQNSGSEPIDVDVN) are disordered.

In terms of assembly, interacts (via C-terminus) with Su(var)205 dimer (via hinge and chromoshadow domain) and with moi to form the terminin, telomere-capping, complex. Interacts with HP6, which is also part of the terminin complex.

Its subcellular location is the nucleus. It is found in the chromosome. The protein resides in the telomere. In terms of biological role, binds to chromosome ends in a sequence-dependent manner and is required for telomere capping. The protein is Telomere-binding protein cav of Drosophila yakuba (Fruit fly).